The primary structure comprises 173 residues: Crossover junction endodeoxyribonuclease RuvC (173 aa).

Catalysis depends on residues D8, E67, and D139. Positions 8, 67, and 139 each coordinate Mg(2+).

This sequence belongs to the RuvC family. As to quaternary structure, homodimer which binds Holliday junction (HJ) DNA. The HJ becomes 2-fold symmetrical on binding to RuvC with unstacked arms; it has a different conformation from HJ DNA in complex with RuvA. In the full resolvosome a probable DNA-RuvA(4)-RuvB(12)-RuvC(2) complex forms which resolves the HJ. It depends on Mg(2+) as a cofactor.

It localises to the cytoplasm. It carries out the reaction Endonucleolytic cleavage at a junction such as a reciprocal single-stranded crossover between two homologous DNA duplexes (Holliday junction).. The RuvA-RuvB-RuvC complex processes Holliday junction (HJ) DNA during genetic recombination and DNA repair. Endonuclease that resolves HJ intermediates. Cleaves cruciform DNA by making single-stranded nicks across the HJ at symmetrical positions within the homologous arms, yielding a 5'-phosphate and a 3'-hydroxyl group; requires a central core of homology in the junction. The consensus cleavage sequence is 5'-(A/T)TT(C/G)-3'. Cleavage occurs on the 3'-side of the TT dinucleotide at the point of strand exchange. HJ branch migration catalyzed by RuvA-RuvB allows RuvC to scan DNA until it finds its consensus sequence, where it cleaves and resolves the cruciform DNA. In Vibrio campbellii (strain ATCC BAA-1116), this protein is Crossover junction endodeoxyribonuclease RuvC.